Consider the following 110-residue polypeptide: Protein ripply3 (110 aa).

Residues 18 to 21 (WRPW) carry the WRPW motif motif. Residues 50–85 (HPVRLFLPRSRMQEYLSRLGSSVLASFPVQATLHFY) form a ripply homology domain region. Positions 87–99 (DEDSSSEEEEDEE) are enriched in acidic residues. Residues 87–110 (DEDSSSEEEEDEEHANTRCRLWRP) form a disordered region.

It belongs to the ripply family.

It is found in the nucleus. In terms of biological role, probable transcriptional regulator involved in developmental processes. The chain is Protein ripply3 (ripply3) from Danio rerio (Zebrafish).